The chain runs to 2355 residues: Acetyl-CoA carboxylase 2 (2355 aa).

Positions 138–645 constitute a Biotin carboxylation domain; the sequence is PIHSILVATN…HTGWLDSRIA (508 aa). One can recognise an ATP-grasp domain in the interval 291–485; it reads GRSLVTVPEE…AAQVAVGMGI (195 aa). 317-374 lines the ATP pocket; that stretch reads CQVVGYPAMIKASWGGGGKGIRKVHNDDEVRALFKQVQGEVPGSPIFIMKVASQSRHL. Residues Glu440, Glu454, and Asn456 each contribute to the Mg(2+) site. Mn(2+) is bound by residues Glu440, Glu454, and Asn456. Arg458 is a catalytic residue. The Biotinyl-binding domain maps to 772–846; the sequence is LQNDHDPSKL…QAGELIAKLD (75 aa). At Lys813 the chain carries N6-biotinyllysine. Thr1133 carries the post-translational modification Phosphothreonine. Residue Ser1293 is modified to Phosphoserine. A CoA carboxyltransferase N-terminal domain is found at 1593–1932; the sequence is QYKPLNNLDR…YVGGPLPVLA (340 aa). The segment at 1593 to 2251 is carboxyltransferase; that stretch reads QYKPLNNLDR…ESSLVRNIRK (659 aa). Arg1841, Lys2142, and Arg2144 together coordinate CoA. Positions 1936–2251 constitute a CoA carboxyltransferase C-terminal domain; that stretch reads PPERTVEYIP…ESSLVRNIRK (316 aa).

As to quaternary structure, homodimer. Biotin is required as a cofactor. It depends on Mg(2+) as a cofactor. Mn(2+) serves as cofactor. In terms of tissue distribution, widely expressed at low levels.

The protein resides in the cytoplasm. It is found in the cytosol. The catalysed reaction is hydrogencarbonate + acetyl-CoA + ATP = malonyl-CoA + ADP + phosphate + H(+). It carries out the reaction N(6)-biotinyl-L-lysyl-[protein] + hydrogencarbonate + ATP = N(6)-carboxybiotinyl-L-lysyl-[protein] + ADP + phosphate + H(+). Its pathway is lipid metabolism; malonyl-CoA biosynthesis; malonyl-CoA from acetyl-CoA: step 1/1. In terms of biological role, multifunctional enzyme that catalyzes the carboxylation of acetyl-CoA, forming malonyl-CoA, which is used in the plastid for fatty acid synthesis and in the cytosol in various biosynthetic pathways including fatty acid elongation. The protein is Acetyl-CoA carboxylase 2 (ACC2) of Arabidopsis thaliana (Mouse-ear cress).